The following is a 175-amino-acid chain: Small ribosomal subunit protein uS7 (175 aa).

Belongs to the universal ribosomal protein uS7 family. Part of the 30S ribosomal subunit. Contacts proteins S9 and S11.

Functionally, one of the primary rRNA binding proteins, it binds directly to 16S rRNA where it nucleates assembly of the head domain of the 30S subunit. Is located at the subunit interface close to the decoding center, probably blocks exit of the E-site tRNA. The polypeptide is Small ribosomal subunit protein uS7 (Neorickettsia sennetsu (strain ATCC VR-367 / Miyayama) (Ehrlichia sennetsu)).